The chain runs to 457 residues: Argininosuccinate lyase (457 aa).

The protein belongs to the lyase 1 family. Argininosuccinate lyase subfamily.

Its subcellular location is the cytoplasm. The enzyme catalyses 2-(N(omega)-L-arginino)succinate = fumarate + L-arginine. It functions in the pathway amino-acid biosynthesis; L-arginine biosynthesis; L-arginine from L-ornithine and carbamoyl phosphate: step 3/3. The sequence is that of Argininosuccinate lyase from Psychrobacter arcticus (strain DSM 17307 / VKM B-2377 / 273-4).